A 223-amino-acid chain; its full sequence is Deoxyribose-phosphate aldolase (223 aa).

D92 functions as the Proton donor/acceptor in the catalytic mechanism. K154 functions as the Schiff-base intermediate with acetaldehyde in the catalytic mechanism. The active-site Proton donor/acceptor is the K182.

It belongs to the DeoC/FbaB aldolase family. DeoC type 1 subfamily.

It is found in the cytoplasm. It carries out the reaction 2-deoxy-D-ribose 5-phosphate = D-glyceraldehyde 3-phosphate + acetaldehyde. It functions in the pathway carbohydrate degradation; 2-deoxy-D-ribose 1-phosphate degradation; D-glyceraldehyde 3-phosphate and acetaldehyde from 2-deoxy-alpha-D-ribose 1-phosphate: step 2/2. In terms of biological role, catalyzes a reversible aldol reaction between acetaldehyde and D-glyceraldehyde 3-phosphate to generate 2-deoxy-D-ribose 5-phosphate. The protein is Deoxyribose-phosphate aldolase of Pasteurella multocida (strain Pm70).